We begin with the raw amino-acid sequence, 270 residues long: tRNA pseudouridine synthase A (270 aa).

Asp-60 acts as the Nucleophile in catalysis. An RNA binding region spans residues 107–111 (FHARF). Tyr-118 serves as a coordination point for substrate. The interval 168 to 172 (QCQSR) is interaction with tRNA.

The protein belongs to the tRNA pseudouridine synthase TruA family. In terms of assembly, homodimer.

The enzyme catalyses uridine(38/39/40) in tRNA = pseudouridine(38/39/40) in tRNA. Formation of pseudouridine at positions 38, 39 and 40 in the anticodon stem and loop of transfer RNAs. The chain is tRNA pseudouridine synthase A from Klebsiella pneumoniae (strain 342).